The sequence spans 485 residues: Glutamyl-tRNA(Gln) amidotransferase subunit A (485 aa).

Residues Lys78 and Ser153 each act as charge relay system in the active site. Ser177 serves as the catalytic Acyl-ester intermediate.

It belongs to the amidase family. GatA subfamily. Heterotrimer of A, B and C subunits.

The catalysed reaction is L-glutamyl-tRNA(Gln) + L-glutamine + ATP + H2O = L-glutaminyl-tRNA(Gln) + L-glutamate + ADP + phosphate + H(+). In terms of biological role, allows the formation of correctly charged Gln-tRNA(Gln) through the transamidation of misacylated Glu-tRNA(Gln) in organisms which lack glutaminyl-tRNA synthetase. The reaction takes place in the presence of glutamine and ATP through an activated gamma-phospho-Glu-tRNA(Gln). The sequence is that of Glutamyl-tRNA(Gln) amidotransferase subunit A from Syntrophus aciditrophicus (strain SB).